The chain runs to 1035 residues: NACHT, LRR and PYD domains-containing protein 3 (1035 aa).

The region spanning 1 to 93 (MKMMSVRCKL…WEKAKKDQPE (93 aa)) is the Pyrin domain. Ser-5 is modified (phosphoserine). A disulfide bond links Cys-8 and Cys-106. Tyr-13 bears the Phosphotyrosine mark. A lipid anchor (S-palmitoyl cysteine) is attached at Cys-128. Residues 129–132 (KKKK) form a required for binding to phosphatidylinositol 4-phosphate (PtdIns4P) region. Residues Tyr-134 and Tyr-138 each carry the phosphotyrosine modification. Positions 138 to 208 (YRRHVRSRFY…SSLKLELLFE (71 aa)) constitute an FISNA domain. Ser-159 is modified (phosphoserine). Tyr-166 bears the Phosphotyrosine mark. Thr-167 contributes to the ATP binding site. Ser-199 carries the phosphoserine modification. Residues 218 to 534 (HTVVFQGAAG…EFFAAMYYLL (317 aa)) enclose the NACHT domain. 224–231 (GAAGIGKT) provides a ligand contact to ATP. A phosphoserine mark is found at Ser-263 and Ser-293. Lys-322 participates in a covalent cross-link: Glycyl lysine isopeptide (Lys-Gly) (interchain with G-Cter in ubiquitin). A Phosphoserine modification is found at Ser-332. The short motif at 353–357 (LEKLQ) is the KFERQ-like motif 1 element. Residue Lys-428 forms a Glycyl lysine isopeptide (Lys-Gly) (interchain with G-Cter in ubiquitin) linkage. An ATP-binding site is contributed by His-520. The KFERQ-like motif 2 motif lies at 603–607 (QVRLE). A Glycyl lysine isopeptide (Lys-Gly) (interchain with G-Cter in ubiquitin) cross-link involves residue Lys-689. Residues Ser-727 and Ser-734 each carry the phosphoserine modification. 5 LRR repeats span residues 741–761 (SLTE…RVLC), 770–791 (NIQR…NISS), 798–818 (KLVE…RLLC), 827–848 (NLQK…DLAL), and 855–875 (SLTR…QVLC). A KFERQ-like motif 3 motif is present at residues 797 to 801 (QKLVE). Phosphoserine is present on Ser-805. S-palmitoyl cysteine attachment occurs at residues Cys-836, Cys-837, and Cys-843. Tyr-860 bears the Phosphotyrosine mark. Residue Lys-877 forms a Glycyl lysine isopeptide (Lys-Gly) (interchain with G-Cter in ubiquitin) linkage. LRR repeat units lie at residues 884 to 905 (NLQK…ALTS), 912 to 932 (NLTH…KLLC), 941 to 962 (KLQM…DLST), and 969 to 990 (SLRK…TLCE). The S-palmitoyl cysteine moiety is linked to residue Cys-957. A Glycyl lysine isopeptide (Lys-Gly) (interchain with G-Cter in ubiquitin) cross-link involves residue Lys-972. The KFERQ-like motif 4 motif lies at 990-994 (EVLKQ). The residue at position 1034 (Ser-1034) is a Phosphoserine.

It belongs to the NLRP family. Sensor component of NLRP3 inflammasomes; inflammasomes are supramolecular complexes that assemble in the cytosol in response to pathogens and other damage-associated signals and play critical roles in innate immunity and inflammation. The core of NLRP3 inflammasomes consists of a signal sensor component (NLRP3), an adapter (PYCARD/ASC), which recruits an effector pro-inflammatory caspase (CASP1 and, possibly, CASP4 and CASP5). Homodecamer; inactive NLRP3 forms homodecameric double-ring cages that hide pyrin domains within NACHT-LRR rings to avoid premature activation. Interacts (via pyrin domain) with PYCARD/ASC (via pyrin domain); interaction is direct. Interacts (via LRR repeat domain) with NEK7 (via N-terminus); the interaction is required for the formation of the complex NLRP3:PYCARD, oligomerization of PYCARD/ASC and activation of CASP1. Interacts (via LRR repeat domain) with NR4A1/Nur77 (via N-terminus); the interaction is direct, requires activation of NR4A1 by its ligands NBRE-containing dsDNA and lipopolysaccharide, and stimulates the association of NLRP3 with NEK7 for non-canonical NLRP3 inflammasome activation. Interacts with CARD8; leading to inhibit formation of the NLRP3 inflammasome. Interacts with MEFV; this interaction targets NLRP3 to degradation by autophagy, hence preventing excessive IL1B- and IL18-mediated inflammation. Interacts with EIF2AK2/PKR; this interaction requires EIF2AK2 activity, is accompanied by EIF2AK2 autophosphorylation and promotes inflammasome assembly in response to specific stimuli. Interacts with GBP5 (via DAPIN domain); this interaction promotes inflammasome assembly in response to microbial and soluble, but not crystalline, agents. Interacts with PML (isoform PML-1) (via the leucine-rich repeat (LRR) domain); PML-mediated increase in NLRP3 inflammasome activation does not depend upon this interaction. Interacts (via NACHT domain) with DHX33 (via DEAH box); NLRP3 activation in presence of cytosolic dsRNA is mediated by DHX33. Interacts (via NACHT and LRR domains) with ARRB2; this interaction is direct and inducible by polyunsaturated fatty acids (PUFAs). Interacts (via NACHT domain) with DDX3X under both LPS-primed and inflammasome-activating conditions. Interacts with IRF4 (via the LRR domain); this interaction is direct and is required for optimal IRF4 binding to IL4 promoter and efficient IL4 transactivation during differentiation of Th2 helper T-cells. Interacts with MAVS; promoting localization to mitochondria and activation of the NLRP3 inflammasome. Interacts with MARK4; promoting localization of NLRP3 to the microtubule organizing center (MTOC). Interacts with TRIM50; this interaction also promotes NLRP3 oligomerization and subsequent inflammasome activation. Interacts with IRGM; preventing NLRP3 inflammasome assembly and promoting NLRP3 degradation. Interacts (via NACHT and LLR domains) with ABHD8; this interaction is enhanced in the presence of NLRP3 inflammasome inducers, such as ATP, nigericin, silica, or alum. Interaction with ABHD8 leads the recruitment of ZDHHC12, hence facilitating NLRP3 palmitoylation and degradation by the chaperone-mediated autophagy pathway (CMA), therefore attenuating NLRP3 inflammasome activation. Phosphorylation by MAPK8/JNK1 increases inflammasome activation by promoting deubiquitination by BRCC3 and NLRP3 homooligomerization. Phosphorylation at Ser-805 by CSNK1A1 prevents inflammasome activation by preventing NEK7 recruitment. Phosphorylation at Ser-5 in the pyrin domain inhibits homomultimerization of NLRP3 and activation of the NLRP3 inflammasome: dephosphorylation by protein phosphatase 2A (PP2A) promotes assembly of the NLRP3 inflammasome. Phosphorylation at Ser-293 by PKD/PRKD1 promotes NLRP3 inflammasome assembly. Phosphorylation by ERK1/MAPK3 promotes NLRP3 inflammasome assembly. Phosphorylation by BTK (at Tyr-134, Tyr-138 and Tyr-166) in the region that mediates binding to phosphatidylinositol phosphate, promotes relocalization of NLRP3 and assembly of the NLRP3 inflammasome. Phosphorylation at Tyr-860 inhibits NLRP3 inflammasome assembly: dephosphorylation by PTPN22 promotes inflammasome activation. Phosphorylated by LATS1 and LATS2 at Ser-263 following palmitoylation by ZDHHC1, promoting its relocalization to the microtubule organizing center (MTOC), where NLRP3 is activated by NEK7, leading to inflammasome assembly and activation. Post-translationally, ubiquitinated; undergoes both 'Lys-48'- and 'Lys-63'-linked polyubiquitination. Ubiquitination does not lead to degradation, but inhibits inflammasome activation. Deubiquitination is catalyzed by BRCC3 and associated with NLRP3 activation and inflammasome assembly. This process can be induced by the activation of Toll-like receptors (by LPS), through a non-transcriptional pathway dependent on the mitochondrial production of reactive oxygen species, and by ATP. Ubiquitinated by TRIM31 via 'Lys-48'-linked ubiquitination, leading to its degradation by the proteasome. Ubiquitinated at Lys-689 by the SCF(FBXL2) complex, leading to its degradation by the proteasome. Ubiquitinated by TRIM35 via 'lys-48' and 'Lys-63'-linked ubiquitination leading to inhibition of NLRP3 inflammasome activation. Undergoes 'Lys-27'-linked polyubiquitination by MARCHF5, leading to NLRP3-NEK7 complex formation and NLRP3 oligomerization. In terms of processing, the disulfide bond in the pyrin domain might play a role in reactive oxygen species-mediated activation. Palmitoylation by ZDHHC12 promotes NLRP3 degradation by the chaperone-mediated autophagy pathway (CMA) and therefore limits NLRP3 inflammasome activation. Interaction with ZDHHC12, and hence NLRP3 palmitoylation, is greatly enhanced by ABHD8. Following palmitoylation, HSPA8/HSC70 recognizes and binds the KFERQ-like motifs on NLRP3 and promotes NLRP3 recruitment to lysosomes, where it is degraded via the chaperone-mediated autophagy pathway in a LAMP2-dependent process. Palmitoylation at Cys-836 and Cys-837 by ZDHHC5 enhances its binding to NEK7 leading to inflammasome assembly and activation. Palmitoylation at Cys-128 and Cys-957 by ZDHHC1 facilitates phosphorylation at Ser-263 by LATS1 and LATS2, promoting its relocalization to the microtubule organizing center (MTOC), where NLRP3 is activated by NEK7, leading to inflammasome assembly and activation. Depalmitoylated by ABHD17A. Post-translationally, degraded via selective autophagy following interaction with IRGM. IRGM promotes NLRP3 recruitment to autophagosome membranes, promoting its SQSTM1/p62-dependent autophagy-dependent degradation.

It is found in the cytoplasm. Its subcellular location is the cytosol. The protein resides in the inflammasome. It localises to the cytoskeleton. The protein localises to the microtubule organizing center. It is found in the golgi apparatus membrane. Its subcellular location is the endoplasmic reticulum. The protein resides in the mitochondrion. It localises to the secreted. The protein localises to the nucleus. It catalyses the reaction ATP + H2O = ADP + phosphate + H(+). Its activity is regulated as follows. Under resting conditions, NLRP3 binds ADP and is autoinhibited. Inactive NLRP3 forms homodecameric double-ring cages that hide pyrin domains within NACHT-LRR rings to avoid premature activation. NLRP3 activation stimuli include extracellular ATP, nigericin, reactive oxygen species, crystals of monosodium urate or cholesterol, amyloid-beta fibers, environmental or industrial particles and nanoparticles, such as asbestos, silica, aluminum salts, cytosolic dsRNA, etc. Almost all stimuli trigger intracellular K(+) efflux. These stimuli lead to membrane perturbations that induce activation of NLRP3. Upon activation, NLRP3 is transported to microtubule organizing center (MTOC), where it is unlocked by NEK7, leading to its relocalization to dispersed trans-Golgi network (dTGN) vesicle membranes and recruitment of PYCARD/ASC for the formation of an active inflammasome complex. NEK7-activated NLRP3 forms a disk-shaped inflammasome. NLRP3 and PYCARD/ASC interact via their respective pyrin domains; interaction initiates speck formation (nucleation) which greatly enhances further addition of soluble PYCARD/ASC molecules to the speck in a prion-like polymerization process. Clustered PYCARD/ASC nucleates the formation of CASP1 filaments through the interaction of their respective CARD domains, acting as a platform for CASP1 polymerization and activation. Active CASP1 then processes IL1B and IL18 precursors, leading to the release of mature cytokines in the extracellular milieu and inflammatory response. NLRP3 inflammasome assembly is inhibited by IRGM, which impedes NLRP3 oligomerization. NLRP3 inflammasome is inhibited by cyclic AMP (cAMP), which directly binds NLRP3; inhibition is relieved by calcium-sensing receptor CASR, which inhibits production of cAMP. Specifically inhibited by sulfonylurea MCC950 (also named CP-456,773, CRID3), a potent and specific small-molecule inhibitor of the NLRP3 inflammasome that acts by preventing ATP hydrolysis. In terms of biological role, sensor component of the NLRP3 inflammasome, which mediates inflammasome activation in response to defects in membrane integrity, leading to secretion of inflammatory cytokines IL1B and IL18 and pyroptosis. In response to pathogens and other damage-associated signals that affect the integrity of membranes, initiates the formation of the inflammasome polymeric complex composed of NLRP3, CASP1 and PYCARD/ASC. Recruitment of pro-caspase-1 (proCASP1) to the NLRP3 inflammasome promotes caspase-1 (CASP1) activation, which subsequently cleaves and activates inflammatory cytokines IL1B and IL18 and gasdermin-D (GSDMD), promoting cytokine secretion and pyroptosis. Activation of NLRP3 inflammasome is also required for HMGB1 secretion; stimulating inflammatory responses. Under resting conditions, ADP-bound NLRP3 is autoinhibited. NLRP3 activation stimuli include extracellular ATP, nigericin, reactive oxygen species, crystals of monosodium urate or cholesterol, amyloid-beta fibers, environmental or industrial particles and nanoparticles, such as asbestos, silica, aluminum salts, cytosolic dsRNA, etc. Almost all stimuli trigger intracellular K(+) efflux. These stimuli lead to membrane perturbation and activation of NLRP3. Upon activation, NLRP3 is transported to microtubule organizing center (MTOC), where it is unlocked by NEK7, leading to its relocalization to dispersed trans-Golgi network (dTGN) vesicle membranes and formation of an active inflammasome complex. Associates with dTGN vesicle membranes by binding to phosphatidylinositol 4-phosphate (PtdIns4P). Shows ATPase activity. Independently of inflammasome activation, regulates the differentiation of T helper 2 (Th2) cells and has a role in Th2 cell-dependent asthma and tumor growth. During Th2 differentiation, required for optimal IRF4 binding to IL4 promoter and for IRF4-dependent IL4 transcription. Binds to the consensus DNA sequence 5'-GRRGGNRGAG-3'. May also participate in the transcription of IL5, IL13, GATA3, CCR3, CCR4 and MAF. This Rattus norvegicus (Rat) protein is NACHT, LRR and PYD domains-containing protein 3.